Consider the following 330-residue polypeptide: Aspartate--ammonia ligase (330 aa).

It belongs to the class-II aminoacyl-tRNA synthetase family. AsnA subfamily.

The protein resides in the cytoplasm. The catalysed reaction is L-aspartate + NH4(+) + ATP = L-asparagine + AMP + diphosphate + H(+). The protein operates within amino-acid biosynthesis; L-asparagine biosynthesis; L-asparagine from L-aspartate (ammonia route): step 1/1. The polypeptide is Aspartate--ammonia ligase (Yersinia enterocolitica serotype O:8 / biotype 1B (strain NCTC 13174 / 8081)).